We begin with the raw amino-acid sequence, 669 residues long: MTGLFQLVSSYSPSGDQPAAVQKLVTNFHAGIAKQVLLGVTGSGKTYTIANVVEQIQKPTLVMAPNKTLAAQLYGEFKAFFPHNAVEYFVSYYDYYQPEAYVPASDTFIEKDSSINEYIEQMRLAATKALLSRSDVLVVATVSAIYGLGAPEDYLSLRLILSLGEHIEQRQLIRHLTELQYTRNELDLVRGSFRVRGEVVDVFPAESEMEALRIELFDGEIESLSLFDPLTGQTVRKLQRFSVYPKTHYATTRERTLSAVDTIKDELKEYLELLYGRNKLVEAQRLAQRTQFDLEMMAEVGYCNGIENYSRHLTGKAPGEPPPTLFDYLPPDALLVIDESHVTIPQIGAMFKGDRSRKETLVEFGFRLPSALDNRPLRFEEWEVRSPRSIYVSATPGSYEFRESAGEVIELLVRPTGLIDPEIEIRPVATQVDDLISQINACIKLGDRVLVTTLTKRMAENLTEYLSEQGIRIRYLHSEIDTVERVEIIRDLRLGKFDVLVGINLLREGLDMPEVSLVAILDADKEGFLRSTSSLIQTIGRAARSVRGRAILYADKVTRSMRAAIDETERRRQKQKEYNAENGIVPKSVVRPISDILEGARDGVEVKSKGKGRRVDEVPADYGALNQAEIAAQMKMLEQQMYQHARDLEFEDAARIRDQIQRLREAGLG.

Residues 26-183 (TNFHAGIAKQ…RHLTELQYTR (158 aa)) enclose the Helicase ATP-binding domain. 39 to 46 (GVTGSGKT) provides a ligand contact to ATP. The Beta-hairpin signature appears at 92–115 (YYDYYQPEAYVPASDTFIEKDSSI). A Helicase C-terminal domain is found at 431-597 (QVDDLISQIN…SVVRPISDIL (167 aa)). Residues 631–666 (AAQMKMLEQQMYQHARDLEFEDAARIRDQIQRLREA) form the UVR domain.

The protein belongs to the UvrB family. As to quaternary structure, forms a heterotetramer with UvrA during the search for lesions. Interacts with UvrC in an incision complex.

Its subcellular location is the cytoplasm. Functionally, the UvrABC repair system catalyzes the recognition and processing of DNA lesions. A damage recognition complex composed of 2 UvrA and 2 UvrB subunits scans DNA for abnormalities. Upon binding of the UvrA(2)B(2) complex to a putative damaged site, the DNA wraps around one UvrB monomer. DNA wrap is dependent on ATP binding by UvrB and probably causes local melting of the DNA helix, facilitating insertion of UvrB beta-hairpin between the DNA strands. Then UvrB probes one DNA strand for the presence of a lesion. If a lesion is found the UvrA subunits dissociate and the UvrB-DNA preincision complex is formed. This complex is subsequently bound by UvrC and the second UvrB is released. If no lesion is found, the DNA wraps around the other UvrB subunit that will check the other stand for damage. The sequence is that of UvrABC system protein B from Xylella fastidiosa (strain M12).